The following is a 163-amino-acid chain: Large ribosomal subunit protein uL11 (163 aa).

The segment at 1-25 is disordered; that stretch reads MAGTIEVLVAGGQADPGPPLGPELG.

The protein belongs to the universal ribosomal protein uL11 family. As to quaternary structure, part of the ribosomal stalk of the 50S ribosomal subunit. Interacts with L10 and the large rRNA to form the base of the stalk. L10 forms an elongated spine to which L12 dimers bind in a sequential fashion forming a multimeric L10(L12)X complex.

In terms of biological role, forms part of the ribosomal stalk which helps the ribosome interact with GTP-bound translation factors. This chain is Large ribosomal subunit protein uL11, found in Natronomonas pharaonis (strain ATCC 35678 / DSM 2160 / CIP 103997 / JCM 8858 / NBRC 14720 / NCIMB 2260 / Gabara) (Halobacterium pharaonis).